A 570-amino-acid polypeptide reads, in one-letter code: Urease subunit alpha (570 aa).

A Urease domain is found at 131-570; that stretch reads GGVDTHIHFI…LPMAQRYFLF (440 aa). Positions 136, 138, and 219 each coordinate Ni(2+). N6-carboxylysine is present on K219. A substrate-binding site is contributed by H221. Ni(2+) contacts are provided by H248 and H274. The Proton donor role is filled by H322. D362 is a binding site for Ni(2+).

It belongs to the metallo-dependent hydrolases superfamily. Urease alpha subunit family. Heterotrimer of UreA (gamma), UreB (beta) and UreC (alpha) subunits. Three heterotrimers associate to form the active enzyme. Ni cation serves as cofactor. Post-translationally, carboxylation allows a single lysine to coordinate two nickel ions.

Its subcellular location is the cytoplasm. The catalysed reaction is urea + 2 H2O + H(+) = hydrogencarbonate + 2 NH4(+). The protein operates within nitrogen metabolism; urea degradation; CO(2) and NH(3) from urea (urease route): step 1/1. The sequence is that of Urease subunit alpha from Methylocella silvestris (strain DSM 15510 / CIP 108128 / LMG 27833 / NCIMB 13906 / BL2).